A 317-amino-acid chain; its full sequence is tRNA dimethylallyltransferase (317 aa).

Glycine 14–serine 21 is an ATP binding site. Substrate is bound at residue threonine 16–serine 21. 2 interaction with substrate tRNA regions span residues aspartate 39–leucine 42 and glutamine 163–arginine 167.

Belongs to the IPP transferase family. In terms of assembly, monomer. Mg(2+) serves as cofactor.

It catalyses the reaction adenosine(37) in tRNA + dimethylallyl diphosphate = N(6)-dimethylallyladenosine(37) in tRNA + diphosphate. Functionally, catalyzes the transfer of a dimethylallyl group onto the adenine at position 37 in tRNAs that read codons beginning with uridine, leading to the formation of N6-(dimethylallyl)adenosine (i(6)A). This chain is tRNA dimethylallyltransferase, found in Xylella fastidiosa (strain 9a5c).